We begin with the raw amino-acid sequence, 510 residues long: Histidine ammonia-lyase (510 aa).

Positions 143–145 form a cross-link, 5-imidazolinone (Ala-Gly); the sequence is ASG. Ser144 bears the 2,3-didehydroalanine (Ser) mark.

The protein belongs to the PAL/histidase family. Contains an active site 4-methylidene-imidazol-5-one (MIO), which is formed autocatalytically by cyclization and dehydration of residues Ala-Ser-Gly.

The protein resides in the cytoplasm. The enzyme catalyses L-histidine = trans-urocanate + NH4(+). It functions in the pathway amino-acid degradation; L-histidine degradation into L-glutamate; N-formimidoyl-L-glutamate from L-histidine: step 1/3. The sequence is that of Histidine ammonia-lyase from Photobacterium profundum (strain SS9).